Consider the following 293-residue polypeptide: Nucleotide-binding protein BC_5156 (293 aa).

14–21 serves as a coordination point for ATP; that stretch reads GMSGAGKT. 65–68 provides a ligand contact to GTP; sequence DLRG.

This sequence belongs to the RapZ-like family.

Its function is as follows. Displays ATPase and GTPase activities. The protein is Nucleotide-binding protein BC_5156 of Bacillus cereus (strain ATCC 14579 / DSM 31 / CCUG 7414 / JCM 2152 / NBRC 15305 / NCIMB 9373 / NCTC 2599 / NRRL B-3711).